Consider the following 123-residue polypeptide: uncharacterized protein (123 aa).

2 helical membrane-spanning segments follow: residues 55–77 (LLIHSYISFMLTLCFFLSLSTIL) and 92–114 (FFINIIICYKHKSSAYCVYTIVY).

The protein resides in the cell membrane. This is an uncharacterized protein from Pasteurella multocida (strain Pm70).